An 875-amino-acid polypeptide reads, in one-letter code: Neurotrypsin (875 aa).

Positions 1 to 20 are cleaved as a signal peptide; it reads MTLARFVLALMLGALPEVVG. An N-linked (GlcNAc...) asparagine glycan is attached at Asn-26. Positions 29-88 are disordered; the sequence is LHHSHRHSPPAGPHYPYYLPTQQRPPRTRPPPPLPRFPRPPRALPAQRPHALQAGHTPRP. Pro residues predominate over residues 56–71; that stretch reads TRPPPPLPRFPRPPRA. In terms of domain architecture, Kringle spans 93 to 165; it reads CPAGEPWVSV…GKVDWGYCDC (73 aa). Intrachain disulfides connect Cys-93/Cys-165, Cys-109/Cys-149, Cys-138/Cys-163, Cys-195/Cys-259, Cys-208/Cys-269, Cys-239/Cys-249, Cys-305/Cys-369, Cys-318/Cys-379, Cys-349/Cys-359, Cys-412/Cys-475, Cys-425/Cys-485, Cys-455/Cys-465, Cys-525/Cys-589, Cys-538/Cys-599, Cys-569/Cys-579, Cys-619/Cys-750, Cys-661/Cys-677, Cys-765/Cys-831, Cys-794/Cys-808, and Cys-821/Cys-850. 4 consecutive SRCR domains span residues 170–271, 280–381, 387–487, and 500–601; these read VRLR…TCSF, IRLA…SCTP, IRLA…ACYP, and VRLM…ICDY. The tract at residues 619–630 is zymogen activation region; that stretch reads CGLRLLHRRQKR. The region spanning 631-874 is the Peptidase S1 domain; it reads IIGGKNSLRG…FVPWIKSVTK (244 aa). The active-site Charge relay system is His-676. A glycan (N-linked (GlcNAc...) asparagine) is linked at Asn-683. Catalysis depends on Asp-726, which acts as the Charge relay system. Catalysis depends on Ser-825, which acts as the Charge relay system.

This sequence belongs to the peptidase S1 family. In terms of tissue distribution, brain and Leydig cells of the testis.

It is found in the secreted. Plays a role in neuronal plasticity and the proteolytic action may subserve structural reorganizations associated with learning and memory operations. The protein is Neurotrypsin (PRSS12) of Homo sapiens (Human).